The primary structure comprises 255 residues: Undecaprenyl-diphosphatase (255 aa).

Helical transmembrane passes span 1–21, 75–95, 96–116, 174–194, 203–223, and 234–254; these read MDIIQVIVLSIIEGITEFLPI, IIISFIPVGIMGLLFHKIVYQ, LFTVQIVATAFIVGGIIFLIV, TEFSFLGALPVMLAASLFDIV, GDISNLVVGFIVSFFMALITI, and NFVPFGIYRILFGVILLMFFV.

This sequence belongs to the UppP family.

Its subcellular location is the cell membrane. The catalysed reaction is di-trans,octa-cis-undecaprenyl diphosphate + H2O = di-trans,octa-cis-undecaprenyl phosphate + phosphate + H(+). In terms of biological role, catalyzes the dephosphorylation of undecaprenyl diphosphate (UPP). This chain is Undecaprenyl-diphosphatase, found in Methanococcus aeolicus (strain ATCC BAA-1280 / DSM 17508 / OCM 812 / Nankai-3).